Consider the following 65-residue polypeptide: Large ribosomal subunit protein uL29 (65 aa).

This sequence belongs to the universal ribosomal protein uL29 family.

This chain is Large ribosomal subunit protein uL29, found in Dehalococcoides mccartyi (strain ATCC BAA-2100 / JCM 16839 / KCTC 5957 / BAV1).